We begin with the raw amino-acid sequence, 419 residues long: UDP-N-acetylglucosamine 1-carboxyvinyltransferase (419 aa).

22–23 contributes to the phosphoenolpyruvate binding site; that stretch reads KN. Residue Arg91 coordinates UDP-N-acetyl-alpha-D-glucosamine. Catalysis depends on Cys115, which acts as the Proton donor. Cys115 is modified (2-(S-cysteinyl)pyruvic acid O-phosphothioketal). UDP-N-acetyl-alpha-D-glucosamine contacts are provided by residues 120-124, 160-163, Asp305, and Ile327; these read RPVDL and KVSV.

The protein belongs to the EPSP synthase family. MurA subfamily.

The protein localises to the cytoplasm. It catalyses the reaction phosphoenolpyruvate + UDP-N-acetyl-alpha-D-glucosamine = UDP-N-acetyl-3-O-(1-carboxyvinyl)-alpha-D-glucosamine + phosphate. It functions in the pathway cell wall biogenesis; peptidoglycan biosynthesis. Cell wall formation. Adds enolpyruvyl to UDP-N-acetylglucosamine. The sequence is that of UDP-N-acetylglucosamine 1-carboxyvinyltransferase from Klebsiella pneumoniae subsp. pneumoniae (strain ATCC 700721 / MGH 78578).